The following is a 675-amino-acid chain: Heat shock 70 kDa protein 12A (675 aa).

The segment at Met1–Asp45 is disordered. At Ala2 the chain carries N-acetylalanine. The span at Ala17–Ala26 shows a compositional bias: polar residues.

The protein belongs to the heat shock protein 70 family. In terms of assembly, interacts with SORL1 (via cytosolic C-terminus); this interaction affects SORL1 internalization and subcellular localization. As to expression, expressed most strongly in brain, kidney and heart with little or no expression in other tissues. In the brain, expressed in glial cells, including astrocytes (at protein level). In the aorta, preferentially expressed in lesions.

It is found in the cytoplasm. Its subcellular location is the nucleus. Adapter protein for SORL1, but not SORT1. Delays SORL1 internalization and affects SORL1 subcellular localization. The polypeptide is Heat shock 70 kDa protein 12A (Hspa12a) (Mus musculus (Mouse)).